A 337-amino-acid polypeptide reads, in one-letter code: Ketol-acid reductoisomerase (NAD(P)(+)) (337 aa).

The KARI N-terminal Rossmann domain occupies 2-187; sequence ARMFYDADAN…GCTRAGVIET (186 aa). Residues 25 to 28, arginine 48, and 88 to 91 each bind NADP(+); these read FGSQ and DEVQ. Histidine 113 is an active-site residue. NADP(+) is bound at residue glycine 139. Residues 188 to 333 enclose the KARI C-terminal knotted domain; it reads SFQEETETDL…AELRGMMPWL (146 aa). Residues aspartate 196, glutamate 200, glutamate 232, and glutamate 236 each coordinate Mg(2+). Serine 257 provides a ligand contact to substrate.

The protein belongs to the ketol-acid reductoisomerase family. The cofactor is Mg(2+).

It carries out the reaction (2R)-2,3-dihydroxy-3-methylbutanoate + NAD(+) = (2S)-2-acetolactate + NADH + H(+). The enzyme catalyses (2R)-2,3-dihydroxy-3-methylbutanoate + NADP(+) = (2S)-2-acetolactate + NADPH + H(+). The protein operates within amino-acid biosynthesis; L-isoleucine biosynthesis; L-isoleucine from 2-oxobutanoate: step 2/4. Its pathway is amino-acid biosynthesis; L-valine biosynthesis; L-valine from pyruvate: step 2/4. Its function is as follows. Involved in the biosynthesis of branched-chain amino acids (BCAA). Catalyzes an alkyl-migration followed by a ketol-acid reduction of (S)-2-acetolactate (S2AL) to yield (R)-2,3-dihydroxy-isovalerate. In the isomerase reaction, S2AL is rearranged via a Mg-dependent methyl migration to produce 3-hydroxy-3-methyl-2-ketobutyrate (HMKB). In the reductase reaction, this 2-ketoacid undergoes a metal-dependent reduction by NADPH or NADH to yield (R)-2,3-dihydroxy-isovalerate. This is Ketol-acid reductoisomerase (NAD(P)(+)) from Syntrophomonas wolfei subsp. wolfei (strain DSM 2245B / Goettingen).